A 178-amino-acid chain; its full sequence is CASP-like protein 4D1 (178 aa).

Residues 1-14 (MAPPPPSPPSVTLR) are Cytoplasmic-facing. A helical membrane pass occupies residues 15-35 (TVLLLLRVLTAAFLVITVVLI). Residues 36-60 (STNTVTLEVSSTSIKMRFNDVYAYR) are Extracellular-facing. Residues 61 to 81 (YMLSAAVIGLLYAVVQLFLTI) traverse the membrane as a helical segment. Over 82–149 (SQFATGTTHP…KFFSKGYASA (68 aa)) the chain is Cytoplasmic. A helical membrane pass occupies residues 150-170 (SLLLFAFVSLAVLSVFSSLAL). At 171–178 (SKRPIQVS) the chain is on the extracellular side.

This sequence belongs to the Casparian strip membrane proteins (CASP) family. As to quaternary structure, homodimer and heterodimers.

The protein localises to the cell membrane. This chain is CASP-like protein 4D1, found in Arabidopsis lyrata subsp. lyrata (Lyre-leaved rock-cress).